Consider the following 334-residue polypeptide: Putative transport protein MTH_1211 (334 aa).

8 helical membrane-spanning segments follow: residues 24–44 (AIVVYPLWTMLFLGAVFAYIV), 60–80 (VSIILAMIVVIMPLVGILVFT), 84–104 (IINSAPSLLSLAGSIHVPGAG), 131–151 (YVVAILQSVPMISLQLFVFLS), 189–209 (VLLSIFYGHFLTALAIGLMAA), 220–240 (AILLGIMTGLFQLIPVIGPWA), 255–275 (ILRGVLVLIFGLFLSTIDIYL), and 289–309 (MIFLVGFLGGPVVWGVAGFIV).

It belongs to the autoinducer-2 exporter (AI-2E) (TC 2.A.86) family.

It is found in the cell membrane. The sequence is that of Putative transport protein MTH_1211 from Methanothermobacter thermautotrophicus (strain ATCC 29096 / DSM 1053 / JCM 10044 / NBRC 100330 / Delta H) (Methanobacterium thermoautotrophicum).